Consider the following 375-residue polypeptide: Growth/differentiation factor 8 (375 aa).

A signal peptide spans 1-23 (MQKLQLCVYIYLFMLIVAGPVDL). Positions 24 to 266 (NENSEQKENV…VTDTPKRSRR (243 aa)) are excised as a propeptide. Asn71 carries N-linked (GlcNAc...) asparagine glycosylation. Cystine bridges form between Cys272/Cys282, Cys281/Cys340, Cys309/Cys372, and Cys313/Cys374.

The protein belongs to the TGF-beta family. In terms of assembly, homodimer; disulfide-linked. Interacts with WFIKKN2, leading to inhibit its activity. Interacts with FSTL3. Synthesized as large precursor molecule that undergoes proteolytic cleavage to generate an N-terminal propeptide and a disulfide linked C-terminal dimer, which is the biologically active molecule. The circulating form consists of a latent complex of the C-terminal dimer and other proteins, including its propeptide, which maintain the C-terminal dimer in a latent, inactive state. Ligand activation requires additional cleavage of the prodomain by a tolloid-like metalloproteinase.

It localises to the secreted. Functionally, acts specifically as a negative regulator of skeletal muscle growth. The protein is Growth/differentiation factor 8 (MSTN) of Papio hamadryas (Hamadryas baboon).